The chain runs to 361 residues: uncharacterized protein (361 aa).

A signal peptide spans 1–19 (MNLVICVLLLSIWKNNCMT). Residues 20–47 (TNQTNGSSTTGDKPVESMQTKLNYLRRN) lie on the Extracellular side of the membrane. The N-linked (GlcNAc...) asparagine glycan is linked to asparagine 24. The helical transmembrane segment at 48-68 (LLILVGIIIMVFVFICFCYLH) threads the bilayer. The Cytoplasmic portion of the chain corresponds to 69-361 (YNCLSDDASK…QVTSEVTLND (293 aa)). Polar residues predominate over residues 99 to 113 (AKTASQCSPETQPML). Disordered stretches follow at residues 99-184 (AKTA…KAHK), 209-247 (PPQL…NPKR), and 295-316 (QNLH…LDSR). Over residues 114 to 133 (STADKSSDSSSPERASAQSS) the composition is skewed to low complexity. Positions 141 to 150 (SSLQKPSIPN) are enriched in polar residues. A compositionally biased stretch (low complexity) spans 299–308 (VSSKVKSSSR).

It localises to the membrane. This is an uncharacterized protein from Homo sapiens (Human).